Consider the following 337-residue polypeptide: METMRAQRLQPGVGTSGRGTLRALRPGVTGAAAATATPPAGPPPAPPPPAPPPPPLLLSGAPGLPLPPGAAGSPAVLREAVEAVVRSFAKHTQGYGRVNVVEALQEFWQMKQSRGADLKNGALVVYEMVPSNSPPYVCYVTLPGGSCFGSFQFCPTKAEARRSAAKIALMNSVFNEHPSRRITDEFIEKSVSEALASFNGNREEADNPNTGIGAFRFMLESNKGKSMLEFQELMTVFQLLHWNGSLKAMRERQCSRQEVLAHYSHRALDDDIRHQMALDWVSREQSVPGALSRELASTERELDEARLAGKELRFHKEKKDILVLAAGQLGNMHSSNC.

A disordered region spans residues 1-64 (METMRAQRLQ…PLLLSGAPGL (64 aa)). Low complexity predominate over residues 26–38 (PGVTGAAAATATP). Pro residues predominate over residues 39 to 56 (PAGPPPAPPPPAPPPPPL).

Belongs to the LIX1 family.

The polypeptide is LIX1-like protein (LIX1L) (Homo sapiens (Human)).